We begin with the raw amino-acid sequence, 76 residues long: Acyl carrier protein (76 aa).

The region spanning 2–76 (KDNFTRLQSI…QDVLNYLERN (75 aa)) is the Carrier domain. Ser-37 is modified (O-(pantetheine 4'-phosphoryl)serine).

This sequence belongs to the acyl carrier protein (ACP) family. Post-translationally, 4'-phosphopantetheine is transferred from CoA to a specific serine of apo-ACP by AcpS. This modification is essential for activity because fatty acids are bound in thioester linkage to the sulfhydryl of the prosthetic group.

The protein localises to the plastid. The protein resides in the chloroplast. The protein operates within lipid metabolism; fatty acid biosynthesis. Carrier of the growing fatty acid chain in fatty acid biosynthesis. The chain is Acyl carrier protein from Phaeodactylum tricornutum (strain CCAP 1055/1).